The chain runs to 449 residues: Methionine aminopeptidase 2-2 (449 aa).

The interval 1–91 (MAAQAAPELA…PRIPLTTLFP (91 aa)) is disordered. A compositionally biased stretch (polar residues) spans 15 to 28 (NKNTGSAEASTVPA). The span at 34-50 (DDAENEGDSDDDRDDEQ) shows a compositional bias: acidic residues. The span at 61–75 (KKKKKKRPKKKKKTA) shows a compositional bias: basic residues. His199 serves as a coordination point for substrate. The a divalent metal cation site is built by Asp219, Asp230, and His299. Residue His307 coordinates substrate. Positions 335 and 430 each coordinate a divalent metal cation.

The protein belongs to the peptidase M24A family. Methionine aminopeptidase eukaryotic type 2 subfamily. The cofactor is Co(2+). It depends on Zn(2+) as a cofactor. Mn(2+) is required as a cofactor. Fe(2+) serves as cofactor.

It is found in the cytoplasm. It carries out the reaction Release of N-terminal amino acids, preferentially methionine, from peptides and arylamides.. Its function is as follows. Cotranslationally removes the N-terminal methionine from nascent proteins. The N-terminal methionine is often cleaved when the second residue in the primary sequence is small and uncharged (Met-Ala-, Cys, Gly, Pro, Ser, Thr, or Val). The chain is Methionine aminopeptidase 2-2 from Arthroderma gypseum (strain ATCC MYA-4604 / CBS 118893) (Microsporum gypseum).